The following is a 261-amino-acid chain: uncharacterized protein (261 aa).

Residues 20 to 34 (TMSTPFLESDNSNTQ) are compositionally biased toward polar residues. A disordered region spans residues 20–55 (TMSTPFLESDNSNTQSISGRIGSNNNSNSKNSGGIG). A compositionally biased stretch (low complexity) spans 35–51 (SISGRIGSNNNSNSKNS). The next 3 membrane-spanning stretches (helical) occupy residues 113–133 (LFSGLFGGGFILTFILCILLL), 183–200 (LIFWITLYGTPIFWILFF), and 204–226 (IISLQFAWILIPIIALSLNMANV).

Belongs to the TVP23 family.

It is found in the membrane. This is an uncharacterized protein from Dictyostelium discoideum (Social amoeba).